A 174-amino-acid chain; its full sequence is Co-chaperone protein HscB (174 aa).

One can recognise a J domain in the interval 2 to 74 (NYFALFDLPR…LNRAIYFLCL (73 aa)).

This sequence belongs to the HscB family. As to quaternary structure, interacts with HscA and stimulates its ATPase activity. Interacts with IscU.

In terms of biological role, co-chaperone involved in the maturation of iron-sulfur cluster-containing proteins. Seems to help targeting proteins to be folded toward HscA. The protein is Co-chaperone protein HscB of Buchnera aphidicola subsp. Acyrthosiphon pisum (strain 5A).